A 136-amino-acid chain; its full sequence is Neuropeptide CCHamide-2 (136 aa).

Residues 1-24 (MKSTISLLLVVICTVVLAAQQSQA) form the signal peptide. An intrachain disulfide couples Cys28 to Cys35. His39 is subject to Histidine amide. Positions 42–78 (RSLSPGSGSGTGVGGGMGEAASGGQEPDYVRPNGLLP) are disordered. A propeptide spanning residues 43–136 (SLSPGSGSGT…ANSAELNGVN (94 aa)) is cleaved from the precursor. Gly residues predominate over residues 48–59 (SGSGTGVGGGMG).

Expressed in endocrine cells of the larval midgut (at protein level). Also expressed in endocrine cells of the midgut of adult males and females (at protein level). In the midgut, expression occurs mainly in the anterior region (at protein level). In the larval central nervous system, expressed in about 40 neurons in the brain hemispheres and ventral nerve cord (at protein level). Highly expressed in larval and adult gut with low levels in larval and adult brain. Very little expression in the larval fat body. However, another study shows high levels of expression in the larval fat body as well as the larval gut with low levels in the larval central nervous system.

The protein localises to the secreted. In terms of biological role, ligand for the CCHamide-2 receptor CCHa2-R. In one study, shown to be an orexigenic peptide which induces appetite and stimulates food intake, leading to the release of insulin-like peptides which stimulate growth. In another study, shown to be a nutrient-sensitive peptide derived from peripheral tissues which controls growth by directly regulating the production and release of insulin-like peptides. The sequence is that of Neuropeptide CCHamide-2 from Drosophila melanogaster (Fruit fly).